A 353-amino-acid chain; its full sequence is Photosystem II D2 protein (353 aa).

Position 2 is an N-acetylthreonine (Thr2). Thr2 is subject to Phosphothreonine. A helical membrane pass occupies residues Cys41–Thr61. His118 contacts chlorophyll a. A helical transmembrane segment spans residues Gly125–Pro141. 2 residues coordinate pheophytin a: Gln130 and Asn143. The chain crosses the membrane as a helical span at residues Val153–Ser166. His198 serves as a coordination point for chlorophyll a. A helical membrane pass occupies residues Ala208–Asp228. A plastoquinone is bound by residues His215 and Phe262. Fe cation is bound at residue His215. His269 provides a ligand contact to Fe cation. A helical membrane pass occupies residues Gly279 to Arg295.

Belongs to the reaction center PufL/M/PsbA/D family. PSII is composed of 1 copy each of membrane proteins PsbA, PsbB, PsbC, PsbD, PsbE, PsbF, PsbH, PsbI, PsbJ, PsbK, PsbL, PsbM, PsbT, PsbX, PsbY, PsbZ, Psb30/Ycf12, at least 3 peripheral proteins of the oxygen-evolving complex and a large number of cofactors. It forms dimeric complexes. Requires The D1/D2 heterodimer binds P680, chlorophylls that are the primary electron donor of PSII, and subsequent electron acceptors. It shares a non-heme iron and each subunit binds pheophytin, quinone, additional chlorophylls, carotenoids and lipids. There is also a Cl(-1) ion associated with D1 and D2, which is required for oxygen evolution. The PSII complex binds additional chlorophylls, carotenoids and specific lipids. as cofactor.

It localises to the plastid. Its subcellular location is the chloroplast thylakoid membrane. It carries out the reaction 2 a plastoquinone + 4 hnu + 2 H2O = 2 a plastoquinol + O2. In terms of biological role, photosystem II (PSII) is a light-driven water:plastoquinone oxidoreductase that uses light energy to abstract electrons from H(2)O, generating O(2) and a proton gradient subsequently used for ATP formation. It consists of a core antenna complex that captures photons, and an electron transfer chain that converts photonic excitation into a charge separation. The D1/D2 (PsbA/PsbD) reaction center heterodimer binds P680, the primary electron donor of PSII as well as several subsequent electron acceptors. D2 is needed for assembly of a stable PSII complex. The polypeptide is Photosystem II D2 protein (Pelargonium hortorum (Common geranium)).